The primary structure comprises 361 residues: MSLPHFDPSHYDAQLADKQARLSGLLAPFAAPEPEVFDSPREHYRLRAEFRLWREGEARHYAMFDPGDKRKPILLDDFPIASERINDLMPRLKAAWENAALGFKLFQVEFLTTLAGDALITLCYHRPLDTFWQTAAERLAAELGVSIVGRSRGQRLVVGRDYVEEELEVAGRRFRYRQPEGAFTQPNGVVCRKMLNWAHDVLGERDDDLLELYCGNGNFTLPLATRVRRVLATEISKTSVNAALTNLESNGVDNVTLVRLSAEELTQALNEVRPFRRLAGVDLKGYDFGSLFVDPPRAGMDPDTCELARRFGRILYISCNPETLAANIARLHDTHRVVRCALFDQFPYTHHMESGVLLERR.

S-adenosyl-L-methionine contacts are provided by Gln-185, Tyr-213, Asn-218, Glu-234, and Asp-294. The active-site Nucleophile is the Cys-319. The active-site Proton acceptor is Glu-353.

Belongs to the class I-like SAM-binding methyltransferase superfamily. RNA M5U methyltransferase family. TrmA subfamily.

The enzyme catalyses uridine(54) in tRNA + S-adenosyl-L-methionine = 5-methyluridine(54) in tRNA + S-adenosyl-L-homocysteine + H(+). It catalyses the reaction uridine(341) in tmRNA + S-adenosyl-L-methionine = 5-methyluridine(341) in tmRNA + S-adenosyl-L-homocysteine + H(+). In terms of biological role, dual-specificity methyltransferase that catalyzes the formation of 5-methyluridine at position 54 (m5U54) in all tRNAs, and that of position 341 (m5U341) in tmRNA (transfer-mRNA). In Azotobacter vinelandii (strain DJ / ATCC BAA-1303), this protein is tRNA/tmRNA (uracil-C(5))-methyltransferase.